The chain runs to 68 residues: Small ribosomal subunit protein bS21 (68 aa).

The protein belongs to the bacterial ribosomal protein bS21 family.

The protein is Small ribosomal subunit protein bS21 of Dinoroseobacter shibae (strain DSM 16493 / NCIMB 14021 / DFL 12).